Here is a 256-residue protein sequence, read N- to C-terminus: Acetyl-coenzyme A carboxylase carboxyl transferase subunit alpha (256 aa).

The region spanning 1–236 (MTDVSRVLKE…KANLIEQITS (236 aa)) is the CoA carboxyltransferase C-terminal domain.

Belongs to the AccA family. In terms of assembly, acetyl-CoA carboxylase is a heterohexamer composed of biotin carboxyl carrier protein (AccB), biotin carboxylase (AccC) and two subunits each of ACCase subunit alpha (AccA) and ACCase subunit beta (AccD).

Its subcellular location is the cytoplasm. The enzyme catalyses N(6)-carboxybiotinyl-L-lysyl-[protein] + acetyl-CoA = N(6)-biotinyl-L-lysyl-[protein] + malonyl-CoA. It functions in the pathway lipid metabolism; malonyl-CoA biosynthesis; malonyl-CoA from acetyl-CoA: step 1/1. Its function is as follows. Component of the acetyl coenzyme A carboxylase (ACC) complex. First, biotin carboxylase catalyzes the carboxylation of biotin on its carrier protein (BCCP) and then the CO(2) group is transferred by the carboxyltransferase to acetyl-CoA to form malonyl-CoA. The chain is Acetyl-coenzyme A carboxylase carboxyl transferase subunit alpha from Streptococcus pyogenes serotype M2 (strain MGAS10270).